The sequence spans 377 residues: Phospho-N-acetylmuramoyl-pentapeptide-transferase (377 aa).

The next 11 helical transmembrane spans lie at 9-29 (YITL…LVAG), 62-82 (MGGA…ADWI), 85-105 (FVWV…MDDY), 122-142 (FFWQ…AVSA), 155-175 (WVGS…VPFF), 178-198 (VSYP…IVGT), 210-230 (GLAI…AYVV), 247-267 (AAEL…FLWF), 274-294 (VFMG…IAVI), 299-319 (IVLF…MVQV), and 354-374 (QVVV…LSTL).

Belongs to the glycosyltransferase 4 family. MraY subfamily. The cofactor is Mg(2+).

It localises to the cell inner membrane. The catalysed reaction is UDP-N-acetyl-alpha-D-muramoyl-L-alanyl-gamma-D-glutamyl-meso-2,6-diaminopimeloyl-D-alanyl-D-alanine + di-trans,octa-cis-undecaprenyl phosphate = di-trans,octa-cis-undecaprenyl diphospho-N-acetyl-alpha-D-muramoyl-L-alanyl-D-glutamyl-meso-2,6-diaminopimeloyl-D-alanyl-D-alanine + UMP. It participates in cell wall biogenesis; peptidoglycan biosynthesis. Catalyzes the initial step of the lipid cycle reactions in the biosynthesis of the cell wall peptidoglycan: transfers peptidoglycan precursor phospho-MurNAc-pentapeptide from UDP-MurNAc-pentapeptide onto the lipid carrier undecaprenyl phosphate, yielding undecaprenyl-pyrophosphoryl-MurNAc-pentapeptide, known as lipid I. In Bordetella parapertussis (strain 12822 / ATCC BAA-587 / NCTC 13253), this protein is Phospho-N-acetylmuramoyl-pentapeptide-transferase.